A 426-amino-acid polypeptide reads, in one-letter code: Serine--tRNA ligase (426 aa).

L-serine is bound at residue 233 to 235 (TAE). 264–266 (RRE) is a binding site for ATP. Glu-287 is a binding site for L-serine. 351 to 354 (EISS) contacts ATP. Position 386 (Ser-386) interacts with L-serine.

Belongs to the class-II aminoacyl-tRNA synthetase family. Type-1 seryl-tRNA synthetase subfamily. As to quaternary structure, homodimer. The tRNA molecule binds across the dimer.

The protein localises to the cytoplasm. The catalysed reaction is tRNA(Ser) + L-serine + ATP = L-seryl-tRNA(Ser) + AMP + diphosphate + H(+). It catalyses the reaction tRNA(Sec) + L-serine + ATP = L-seryl-tRNA(Sec) + AMP + diphosphate + H(+). Its pathway is aminoacyl-tRNA biosynthesis; selenocysteinyl-tRNA(Sec) biosynthesis; L-seryl-tRNA(Sec) from L-serine and tRNA(Sec): step 1/1. In terms of biological role, catalyzes the attachment of serine to tRNA(Ser). Is also able to aminoacylate tRNA(Sec) with serine, to form the misacylated tRNA L-seryl-tRNA(Sec), which will be further converted into selenocysteinyl-tRNA(Sec). This is Serine--tRNA ligase from Prochlorococcus marinus (strain NATL1A).